Consider the following 206-residue polypeptide: Large ribosomal subunit protein uL3 (206 aa).

The tract at residues 127–151 (SGGPSSHGSKFHRHLGGTGQATTPA) is disordered.

This sequence belongs to the universal ribosomal protein uL3 family. As to quaternary structure, part of the 50S ribosomal subunit. Forms a cluster with proteins L14 and L19.

In terms of biological role, one of the primary rRNA binding proteins, it binds directly near the 3'-end of the 23S rRNA, where it nucleates assembly of the 50S subunit. The chain is Large ribosomal subunit protein uL3 from Borreliella burgdorferi (strain ATCC 35210 / DSM 4680 / CIP 102532 / B31) (Borrelia burgdorferi).